A 481-amino-acid chain; its full sequence is MTNLSLDGRFARELPEMAVRWKAEEAPDPRLLVLNDELASGLGLDADWLRSPDGVRLLVGNSVPDGATPVAQAYAGHQFGGFAPRLGDGRALLLGELVDGDGRMRDVHLKGSGHTPFARAGDGLAAVGPMLREYLVSEAMHALGIPTTRSLAVVATGRPVRRESVLDGAVLTRVASSHLRVGSFQYAAVTGDTDLVRRLAGHAIARHHPEVAGAADPYLGLFEAVCSAQAQLIARWMLVGFVHGVMNTDNMTISGETIDYGPCAFMDVYDPETVFSSIDSWGRYAYGNQPSIAAWNLARFAETLLPLFDDDIDRAITLAQNALGAFGRHYEGALTAGMQAKLGLTGVDGPAVAPLLDELLKLLQDNHIDFTSFFRALGLAARGDNEPVRGLFVDLAGFDAWLDSWRALGPDGAAMDRVNPVYIPRNHLVEEALTAAAAGDMEPFETLLDAVTGPFDERPGLQRYAEPAPEAFGRYRTFCGT.

ATP contacts are provided by G87, G89, R90, K110, D122, G123, R173, and R180. Residue D249 is the Proton acceptor of the active site. Positions 250 and 259 each coordinate Mg(2+). Residue D259 coordinates ATP.

It belongs to the SELO family. The cofactor is Mg(2+). It depends on Mn(2+) as a cofactor.

The catalysed reaction is L-seryl-[protein] + ATP = 3-O-(5'-adenylyl)-L-seryl-[protein] + diphosphate. The enzyme catalyses L-threonyl-[protein] + ATP = 3-O-(5'-adenylyl)-L-threonyl-[protein] + diphosphate. It carries out the reaction L-tyrosyl-[protein] + ATP = O-(5'-adenylyl)-L-tyrosyl-[protein] + diphosphate. It catalyses the reaction L-histidyl-[protein] + UTP = N(tele)-(5'-uridylyl)-L-histidyl-[protein] + diphosphate. The catalysed reaction is L-seryl-[protein] + UTP = O-(5'-uridylyl)-L-seryl-[protein] + diphosphate. The enzyme catalyses L-tyrosyl-[protein] + UTP = O-(5'-uridylyl)-L-tyrosyl-[protein] + diphosphate. Its function is as follows. Nucleotidyltransferase involved in the post-translational modification of proteins. It can catalyze the addition of adenosine monophosphate (AMP) or uridine monophosphate (UMP) to a protein, resulting in modifications known as AMPylation and UMPylation. The protein is Protein nucleotidyltransferase YdiU of Mycobacterium sp. (strain KMS).